The chain runs to 500 residues: Na(+)/H(+) antiporter NhaB (500 aa).

12 helical membrane-spanning segments follow: residues 28–50 (FLML…LLVI), 58–78 (MALK…ALLL), 96–116 (VILL…LLLF), 129–149 (ALLA…LDAL), 150–170 (TVTA…HRVA), 205–225 (LLMH…VGEP), 241–261 (FFLK…VTCL), 311–331 (ILIA…LMVI), 350–370 (FKDA…VAVI), 394–414 (MLFI…VATI), 449–469 (VATP…IAPL), and 477–497 (MVWM…YAVS).

Belongs to the NhaB Na(+)/H(+) (TC 2.A.34) antiporter family.

It localises to the cell inner membrane. The catalysed reaction is 2 Na(+)(in) + 3 H(+)(out) = 2 Na(+)(out) + 3 H(+)(in). Its function is as follows. Na(+)/H(+) antiporter that extrudes sodium in exchange for external protons. This Pseudomonas fluorescens (strain Pf0-1) protein is Na(+)/H(+) antiporter NhaB.